The sequence spans 219 residues: tRNA (guanine-N(7)-)-methyltransferase (219 aa).

Residues Glu-43, Asp-68, Glu-101, and Asn-124 each contribute to the S-adenosyl-L-methionine site. The substrate site is built by Lys-128 and Asp-160.

It belongs to the class I-like SAM-binding methyltransferase superfamily. TrmB family.

The enzyme catalyses guanosine(46) in tRNA + S-adenosyl-L-methionine = N(7)-methylguanosine(46) in tRNA + S-adenosyl-L-homocysteine. It functions in the pathway tRNA modification; N(7)-methylguanine-tRNA biosynthesis. Functionally, catalyzes the formation of N(7)-methylguanine at position 46 (m7G46) in tRNA. The polypeptide is tRNA (guanine-N(7)-)-methyltransferase (Clostridium botulinum (strain Alaska E43 / Type E3)).